The chain runs to 384 residues: Succinyl-diaminopimelate desuccinylase (384 aa).

Histidine 75 contacts Zn(2+). Residue aspartate 77 is part of the active site. Aspartate 108 lines the Zn(2+) pocket. Catalysis depends on glutamate 142, which acts as the Proton acceptor. Residues glutamate 143, glutamate 171, and histidine 357 each contribute to the Zn(2+) site.

This sequence belongs to the peptidase M20A family. DapE subfamily. Homodimer. Zn(2+) is required as a cofactor. It depends on Co(2+) as a cofactor.

It catalyses the reaction N-succinyl-(2S,6S)-2,6-diaminopimelate + H2O = (2S,6S)-2,6-diaminopimelate + succinate. It participates in amino-acid biosynthesis; L-lysine biosynthesis via DAP pathway; LL-2,6-diaminopimelate from (S)-tetrahydrodipicolinate (succinylase route): step 3/3. In terms of biological role, catalyzes the hydrolysis of N-succinyl-L,L-diaminopimelic acid (SDAP), forming succinate and LL-2,6-diaminopimelate (DAP), an intermediate involved in the bacterial biosynthesis of lysine and meso-diaminopimelic acid, an essential component of bacterial cell walls. This chain is Succinyl-diaminopimelate desuccinylase, found in Shewanella oneidensis (strain ATCC 700550 / JCM 31522 / CIP 106686 / LMG 19005 / NCIMB 14063 / MR-1).